A 364-amino-acid chain; its full sequence is Chorismate synthase (364 aa).

Arg-48 contributes to the NADP(+) binding site. FMN-binding positions include 125 to 127 (RSS), 237 to 238 (NA), Gly-277, 292 to 296 (KPTSS), and Arg-318.

The protein belongs to the chorismate synthase family. Homotetramer. It depends on FMNH2 as a cofactor.

The catalysed reaction is 5-O-(1-carboxyvinyl)-3-phosphoshikimate = chorismate + phosphate. Its pathway is metabolic intermediate biosynthesis; chorismate biosynthesis; chorismate from D-erythrose 4-phosphate and phosphoenolpyruvate: step 7/7. Catalyzes the anti-1,4-elimination of the C-3 phosphate and the C-6 proR hydrogen from 5-enolpyruvylshikimate-3-phosphate (EPSP) to yield chorismate, which is the branch point compound that serves as the starting substrate for the three terminal pathways of aromatic amino acid biosynthesis. This reaction introduces a second double bond into the aromatic ring system. The polypeptide is Chorismate synthase (Albidiferax ferrireducens (strain ATCC BAA-621 / DSM 15236 / T118) (Rhodoferax ferrireducens)).